We begin with the raw amino-acid sequence, 440 residues long: Chromosomal replication initiator protein DnaA (440 aa).

The segment at methionine 1–asparagine 74 is domain I, interacts with DnaA modulators. A domain II region spans residues asparagine 74–threonine 99. Residues isoleucine 100–alanine 316 form a domain III, AAA+ region region. Residues glycine 146, glycine 148, lysine 149, and threonine 150 each contribute to the ATP site. Residues threonine 317–serine 440 are domain IV, binds dsDNA.

The protein belongs to the DnaA family. In terms of assembly, oligomerizes as a right-handed, spiral filament on DNA at oriC.

The protein localises to the cytoplasm. Its function is as follows. Plays an essential role in the initiation and regulation of chromosomal replication. ATP-DnaA binds to the origin of replication (oriC) to initiate formation of the DNA replication initiation complex once per cell cycle. Binds the DnaA box (a 9 base pair repeat at the origin) and separates the double-stranded (ds)DNA. Forms a right-handed helical filament on oriC DNA; dsDNA binds to the exterior of the filament while single-stranded (ss)DNA is stabiized in the filament's interior. The ATP-DnaA-oriC complex binds and stabilizes one strand of the AT-rich DNA unwinding element (DUE), permitting loading of DNA polymerase. After initiation quickly degrades to an ADP-DnaA complex that is not apt for DNA replication. Binds acidic phospholipids. This is Chromosomal replication initiator protein DnaA from Campylobacter jejuni subsp. jejuni serotype O:2 (strain ATCC 700819 / NCTC 11168).